We begin with the raw amino-acid sequence, 531 residues long: 2,3-bisphosphoglycerate-independent phosphoglycerate mutase (531 aa).

2 residues coordinate Mn(2+): aspartate 15 and serine 65. Residue serine 65 is the Phosphoserine intermediate of the active site. Residues histidine 126, 155-156, arginine 187, arginine 193, 257-260, and lysine 330 contribute to the substrate site; these read RD and RPDR. 5 residues coordinate Mn(2+): aspartate 397, histidine 401, aspartate 438, histidine 439, and histidine 456.

The protein belongs to the BPG-independent phosphoglycerate mutase family. As to quaternary structure, monomer. Mn(2+) is required as a cofactor.

The catalysed reaction is (2R)-2-phosphoglycerate = (2R)-3-phosphoglycerate. The protein operates within carbohydrate degradation; glycolysis; pyruvate from D-glyceraldehyde 3-phosphate: step 3/5. In terms of biological role, catalyzes the interconversion of 2-phosphoglycerate and 3-phosphoglycerate. The chain is 2,3-bisphosphoglycerate-independent phosphoglycerate mutase from Thermosynechococcus vestitus (strain NIES-2133 / IAM M-273 / BP-1).